Reading from the N-terminus, the 440-residue chain is Phosphatidylcholine-sterol acyltransferase (440 aa).

Residues 1–24 form the signal peptide; it reads MGPPGSPWQWVLLLLGLLLPPAAP. An N-linked (GlcNAc...) asparagine glycan is attached at N44. C74 and C98 are disulfide-bonded. N108 is a glycosylation site (N-linked (GlcNAc...) asparagine). S205 serves as the catalytic Nucleophile. N296 carries N-linked (GlcNAc...) asparagine glycosylation. C337 and C380 are disulfide-bonded. Catalysis depends on charge relay system residues D369 and H401. Residue N408 is glycosylated (N-linked (GlcNAc...) asparagine).

It belongs to the AB hydrolase superfamily. Lipase family. Detected in blood plasma (at protein level). Highly expressed in liver.

The protein resides in the secreted. The catalysed reaction is a sterol + a 1,2-diacyl-sn-glycero-3-phosphocholine = a sterol ester + a 1-acyl-sn-glycero-3-phosphocholine. The enzyme catalyses a 1-O-alkyl-2-acetyl-sn-glycero-3-phosphocholine + H2O = a 1-O-alkyl-sn-glycero-3-phosphocholine + acetate + H(+). It catalyses the reaction a 1-hexadecanoyl-2-acyl-sn-glycero-3-phosphocholine + (24S)-hydroxycholesterol = (24S)-24-hydroxycholesterol ester + 1-hexadecanoyl-sn-glycero-3-phosphocholine. It carries out the reaction (24S)-hydroxycholesterol + 1-hexadecanoyl-2-(9Z,12Z-octadecadienoyl)-sn-glycero-3-phosphocholine = (24S)-hydroxycholesterol 3-linoleoate + 1-hexadecanoyl-sn-glycero-3-phosphocholine. The catalysed reaction is 1-hexadecanoyl-2-(5Z,8Z,11Z,14Z-eicosatetraenoyl)-sn-glycero-3-phosphocholine + cholesterol = cholesteryl (5Z,8Z,11Z,14Z)-eicosatetraenoate + 1-hexadecanoyl-sn-glycero-3-phosphocholine. The enzyme catalyses 1-hexadecanoyl-2-(9Z-octadecenoyl)-sn-glycero-3-phosphocholine + cholesterol = cholesteryl (9Z-octadecenoate) + 1-hexadecanoyl-sn-glycero-3-phosphocholine. It catalyses the reaction 1-hexadecanoyl-2-(8Z,11Z,14Z-eicosatrienoyl)-sn-glycero-3-phosphocholine + cholesterol = cholesteryl (8Z,11Z,14Z)-eicosatrienoate + 1-hexadecanoyl-sn-glycero-3-phosphocholine. It carries out the reaction 1-hexadecanoyl-2-(5Z,8Z,11Z-eicosatrienoyl)-sn-glycero-3-phosphocholine + cholesterol = cholesteryl (5Z,8Z,11Z)-eicosatrienoate + 1-hexadecanoyl-sn-glycero-3-phosphocholine. The catalysed reaction is 1-hexadecanoyl-2-(5Z,8Z,11Z,14Z,17Z-eicosapentaenoyl)-sn-glycero-3-phosphocholine + cholesterol = (5Z,8Z,11Z,14Z,17Z-eicosapentaenoyl)-cholesterol + 1-hexadecanoyl-sn-glycero-3-phosphocholine. The enzyme catalyses 1-hexadecanoyl-2-(9Z,12Z-octadecadienoyl)-sn-glycero-3-phosphocholine + cholesterol = cholesteryl (9Z,12Z)-octadecadienoate + 1-hexadecanoyl-sn-glycero-3-phosphocholine. It catalyses the reaction 1-hexadecanoyl-2-(6Z,9Z,12Z-octadecatrienoyl)-sn-glycero-3-phosphocholine + cholesterol = (6Z,9Z,12Z-octadecatrienoyl)-cholesterol + 1-hexadecanoyl-sn-glycero-3-phosphocholine. It carries out the reaction 1-hexadecanoyl-2-(11Z,14Z,17Z-eicosatrienoyl)-sn-glycero-3-phosphocholine + cholesterol = (11Z,14Z,17Z-eicosatrienoyl)-cholesterol + 1-hexadecanoyl-sn-glycero-3-phosphocholine. The catalysed reaction is 1-hexadecanoyl-2-(9Z,12Z,15Z-octadecatrienoyl)-sn-glycero-3-phosphocholine + cholesterol = (9Z,12Z,15Z-octadecatrienoyl)-cholesterol + 1-hexadecanoyl-sn-glycero-3-phosphocholine. The enzyme catalyses 1-hexadecanoyl-2-(9Z,12Z-octadecadienoyl)-sn-glycero-3-phosphocholine + H2O = (9Z,12Z)-octadecadienoate + 1-hexadecanoyl-sn-glycero-3-phosphocholine + H(+). It catalyses the reaction 1-hexadecanoyl-2-(5Z,8Z,11Z,14Z-eicosatetraenoyl)-sn-glycero-3-phosphocholine + H2O = 1-hexadecanoyl-sn-glycero-3-phosphocholine + (5Z,8Z,11Z,14Z)-eicosatetraenoate + H(+). It carries out the reaction a 1-O-alkyl-2-acetyl-sn-glycero-3-phosphocholine + 1-hexadecanoyl-sn-glycero-3-phosphocholine = 1-hexadecanoyl-2-acetyl-sn-glycero-3-phosphocholine + a 1-O-alkyl-sn-glycero-3-phosphocholine. In terms of biological role, central enzyme in the extracellular metabolism of plasma lipoproteins. Synthesized mainly in the liver and secreted into plasma where it converts cholesterol and phosphatidylcholines (lecithins) to cholesteryl esters and lysophosphatidylcholines on the surface of high and low density lipoproteins (HDLs and LDLs). The cholesterol ester is then transported back to the liver. Also produced in the brain by primary astrocytes, and esterifies free cholesterol on nascent APOE-containing lipoproteins secreted from glia and influences cerebral spinal fluid (CSF) APOE- and APOA1 levels. Together with APOE and the cholesterol transporter ABCA1, plays a key role in the maturation of glial-derived, nascent lipoproteins. Required for remodeling high-density lipoprotein particles into their spherical forms. Has a preference for plasma 16:0-18:2 or 18:O-18:2 phosphatidylcholines. Catalyzes the hydrolysis of 1-O-alkyl-2-acetyl-sn-glycero-3-phosphocholine (platelet-activating factor or PAF) to 1-O-alkyl-sn-glycero-3-phosphocholine (lyso-PAF). Also catalyzes the transfer of the acetate group from PAF to 1-hexadecanoyl-sn-glycero-3-phosphocholine forming lyso-PAF. Catalyzes the esterification of (24S)-hydroxycholesterol (24(S)OH-C), also known as cerebrosterol to produce 24(S)OH-C monoesters. In Oryctolagus cuniculus (Rabbit), this protein is Phosphatidylcholine-sterol acyltransferase (LCAT).